The following is a 390-amino-acid chain: Curcumin synthase 3 (390 aa).

C164 is a catalytic residue.

The protein belongs to the thiolase-like superfamily. Chalcone/stilbene synthases family. In terms of assembly, homodimer.

The catalysed reaction is (E)-feruloylacetyl-CoA + (E)-feruloyl-CoA + H2O = curcumin + CO2 + 2 CoA. It catalyses the reaction (E)-feruloylacetyl-CoA + (E)-4-coumaroyl-CoA + H2O = demethoxycurcumin + CO2 + 2 CoA. It carries out the reaction (4-coumaroyl)acetyl-CoA + 4-coumaroyl-CoA + H2O = bisdemethoxycurcumin + CO2 + 2 CoA. It functions in the pathway secondary metabolite biosynthesis; flavonoid biosynthesis. In terms of biological role, catalyzes the synthesis of curcumin by condensing feruloyl-CoA with a diketide-CoA in the curcuminoid biosynthesis. Also acts as a demethoxycurcumin synthase by accepting 4-coumaroyl-CoA as a starter substrate instead of feruloyl-CoA. This is Curcumin synthase 3 (CURS3) from Curcuma longa (Turmeric).